Reading from the N-terminus, the 241-residue chain is Pyridoxine 5'-phosphate synthase (241 aa).

Asparagine 7 provides a ligand contact to 3-amino-2-oxopropyl phosphate. Aspartate 9–histidine 10 contributes to the 1-deoxy-D-xylulose 5-phosphate binding site. A 3-amino-2-oxopropyl phosphate-binding site is contributed by arginine 18. The Proton acceptor role is filled by histidine 43. Positions 45 and 50 each coordinate 1-deoxy-D-xylulose 5-phosphate. Glutamate 70 functions as the Proton acceptor in the catalytic mechanism. Threonine 100 is a 1-deoxy-D-xylulose 5-phosphate binding site. The Proton donor role is filled by histidine 191. 3-amino-2-oxopropyl phosphate-binding positions include glycine 192 and glycine 213–histidine 214.

Belongs to the PNP synthase family. Homooctamer; tetramer of dimers.

It is found in the cytoplasm. The catalysed reaction is 3-amino-2-oxopropyl phosphate + 1-deoxy-D-xylulose 5-phosphate = pyridoxine 5'-phosphate + phosphate + 2 H2O + H(+). The protein operates within cofactor biosynthesis; pyridoxine 5'-phosphate biosynthesis; pyridoxine 5'-phosphate from D-erythrose 4-phosphate: step 5/5. In terms of biological role, catalyzes the complicated ring closure reaction between the two acyclic compounds 1-deoxy-D-xylulose-5-phosphate (DXP) and 3-amino-2-oxopropyl phosphate (1-amino-acetone-3-phosphate or AAP) to form pyridoxine 5'-phosphate (PNP) and inorganic phosphate. The sequence is that of Pyridoxine 5'-phosphate synthase from Maridesulfovibrio salexigens (strain ATCC 14822 / DSM 2638 / NCIMB 8403 / VKM B-1763) (Desulfovibrio salexigens).